The following is a 432-amino-acid chain: Nematocyst expressed protein 3-like (432 aa).

Residues 1 to 19 (MRVVYLVLVVAVIIAITEA) form the signal peptide. Intrachain disulfides connect C52–C91, C59–C84, C73–C88, C125–C140, C157–C176, and C166–C180. ShKT domains are found at residues 59–91 (CKAF…CKLC), 107–143 (VVRA…CMLC), and 149–183 (GPCD…CDVY). A compositionally biased stretch (low complexity) spans 235–313 (GAQYPAATAA…PEAAPSEPEA (79 aa)). The segment at 235–432 (GAQYPAATAA…KSKSGHKRHH (198 aa)) is disordered. The span at 314 to 330 (APAPAPEMAPAPAPEMA) shows a compositional bias: pro residues. The segment covering 331–408 (PAPEAASAPA…AAPSEQPMPG (78 aa)) has biased composition (low complexity). A compositionally biased stretch (basic residues) spans 409 to 432 (KKSKSKPSKRKGVKKSKSGHKRHH).

It belongs to the NEP3 family. As to expression, nematocytes. In late planulae, transcripts are found throughout the ectoderm in nematocytes, with high concentration of expressing cells in the oral pole. In primary polyps, is expressed in nematocytes in the body wall and physa ectoderm and in the upper and lower pharynx.

The protein localises to the nematocyst. It localises to the secreted. Functionally, probable toxin. The chain is Nematocyst expressed protein 3-like from Nematostella vectensis (Starlet sea anemone).